Consider the following 810-residue polypeptide: MPSGHNDKNANQESVEEAVLKYVGVGLDHQNHDPQLHTKDLENKHSKKQNIVESSSDVDVNNNDDSNRNEDNNDDSENISALNANESSSNVDHANSNEQHNAVMDWYLRQTAHNQQDDEDDENNNNTDNGNDSNNHFSQSDIVVDDDDDKNKKDAGVGVDDDHQSMAMAAVAAAYTLSKNNNNNNSIANDSNSRKRQHDNGNNHENSQKKRKNNNDDDDRQIGNVDPELTTLGDADDNDTNNDVIDRDQLVHKAIIDADSITQHPDFQQYLNTAADTDDNEKLKHIKDHLMRTHGLNHQNKNHNDDTDDLSNSTKQYSELQKDSMLDSSLNKSRNYMEVLPKVISQDTQPHQQKSPSHDNEAGSVDNSEISQLLQSAATKASSLVSLSSSSATPSTSRSNNSKAFDKAEDAALERFINEYEAIERLTRQQVCERIWSSDRPKDNFWNNIYKVLPYRSSSSIYKHMRRKYHIFEQRGKWTAEEEQELAKLCAEKEGQWAEIGKTLGRMPEDCRDRWRNYVKCGTNRASNRWSVEEEELLKKVISDMLEEAQQQQSQLHPNLLEEEQHLLQDDQNDHRNNDEDDDDTASAAAAAAAAIQEQQQLLQQKQQDDDDAIAAAAAAASSSLGDNKDEDKPHDSLGIQLDDNSQNSMVPAPSATSTHSKSLSNTIRRHNNKLRKSLMGNGKLDFKDIINWTIVSERMGGTRSRIQCRYKWNKLVKREAIAKIQTVKDDDMLWIFEKLRDLGITEDSQVDWDELAALKPGMKLNGLELKLCYERMKKKVKGYKQKSINEISKELVDYFSSNISMKTEN.

Composition is skewed to basic and acidic residues over residues 1-10 and 29-44; these read MPSGHNDKNA and HQNH…LENK. 5 disordered regions span residues 1 to 80, 114 to 161, 180 to 243, 294 to 313, and 346 to 365; these read MPSG…ENIS, NQQD…GVDD, NNNN…TNND, HGLN…LSNS, and QDTQ…AGSV. Composition is skewed to low complexity over residues 51–64 and 124–135; these read IVES…NNND and NNNTDNGNDSNN. Residues 149 to 161 are compositionally biased toward basic and acidic residues; the sequence is DKNKKDAGVGVDD. The span at 180 to 191 shows a compositional bias: low complexity; it reads NNNNNNSIANDS. Basic and acidic residues predominate over residues 198-208; it reads HDNGNNHENSQ. Residues 346 to 355 show a composition bias toward polar residues; that stretch reads QDTQPHQQKS. S355 carries the phosphoserine modification. In terms of domain architecture, HTH myb-type spans 470–523; sequence HIFEQRGKWTAEEEQELAKLCAEKEGQWAEIGKTLGRMPEDCRDRWRNYVKCGT. Residues 497–519 constitute a DNA-binding region (H-T-H motif); sequence WAEIGKTLGRMPEDCRDRWRNYV. The tract at residues 572 to 667 is disordered; the sequence is QNDHRNNDED…STHSKSLSNT (96 aa). Residues 586 to 606 are compositionally biased toward low complexity; that stretch reads ASAAAAAAAAIQEQQQLLQQK. Positions 627 to 636 are enriched in basic and acidic residues; that stretch reads DNKDEDKPHD. Residues 643–667 show a composition bias toward polar residues; sequence DDNSQNSMVPAPSATSTHSKSLSNT. The Myb-like domain maps to 692–717; it reads NWTIVSERMGGTRSRIQCRYKWNKLV. K807 is covalently cross-linked (Glycyl lysine isopeptide (Lys-Gly) (interchain with G-Cter in SUMO)).

The protein resides in the nucleus. Its function is as follows. DNA-binding protein that recognizes sites within both the enhancer and the promoter of rRNA transcription, as well as upstream of many genes transcribed by RNA polymerase II. It is essential for cell growth. May stimulate or inhibit transcription. Specifically recognizes the sequence 5'-CCGGGTA-3' or 5'-CGGGTRR-3' (where R is any purine). A member of the general regulatory factors (GRFs) which act as genome partitioners. Acts as a chromatin insulator which are known as STARs (Subtelomeric anti-silencing region). STARs prevent negative or positive transcription influence by extending across chromatin to a promoter. The protein is DNA-binding protein REB1 (REB1) of Saccharomyces cerevisiae (strain ATCC 204508 / S288c) (Baker's yeast).